The following is a 190-amino-acid chain: dCTP deaminase, dUMP-forming (190 aa).

DCTP contacts are provided by residues 101-106 (KSSLGR), Asp119, 127-129 (TLE), Gln148, Tyr162, Lys170, and Gln174. Glu129 serves as the catalytic Proton donor/acceptor. The disordered stretch occupies residues 160-190 (HPYGSSRAGSKYQGQRGPTPSRSCQNFIRST). Residues 171 to 190 (YQGQRGPTPSRSCQNFIRST) show a composition bias toward polar residues.

This sequence belongs to the dCTP deaminase family. In terms of assembly, homotrimer.

The enzyme catalyses dCTP + 2 H2O = dUMP + NH4(+) + diphosphate. It functions in the pathway pyrimidine metabolism; dUMP biosynthesis; dUMP from dCTP: step 1/1. Functionally, bifunctional enzyme that catalyzes both the deamination of dCTP to dUTP and the hydrolysis of dUTP to dUMP without releasing the toxic dUTP intermediate. The protein is dCTP deaminase, dUMP-forming of Mycobacterium bovis (strain ATCC BAA-935 / AF2122/97).